Reading from the N-terminus, the 570-residue chain is MALSGHVLIDPARLPRDTGPELMWAPSLRNSLRVSPEALELAEREAERARSERWDRCAQVLKNRLLRVELDGIMRDHLARAEEIRQDLDAVVAFSDGLESMQVRSPSTGGRSAPAPPSPSPAQPFTRLTGNAQYAVSISPTDPPLMVAGSLAQTLLGNLYGNINQWVPSFGPWYRTMSANAMQRRVFPKQLRGNLNFTNSVSLKLMTEVVAVLEGTTQDFFSDVRHLPDLQAALILSVAYLLLQGGSSHQQRPLPASREELLELGPESLEKIIADLKAKSPGGNFMILTSGNKEARQSIAPLNRQAAYPPGTFADNKIYNLFVGAGLLPTTAALNVPGAAGRDRDLVYRIANQIFGEDVPPFSSHQWNLRVGLAALEALMLVYTLCETANLAEAATRRLHLSSLLPQAMQRRKPAMASAGMPGAYPVQTLFRHGELFRFIWAHYVRPTVAADPQASISSLFPGLVLLALELKLMDGQAPSHYAINLTGQKFDTLFEIINQKLLFHDPAAMLAARTQLRLAFEDGVGVALGRPSPMLAAREILERQFSASDDYDRLYFLTLGYLASPVAPS.

The interval 1-54 is interaction with major capsid protein/MCP; the sequence is MALSGHVLIDPARLPRDTGPELMWAPSLRNSLRVSPEALELAEREAERARSERW. The tract at residues 102–123 is disordered; it reads QVRSPSTGGRSAPAPPSPSPAQ.

The protein belongs to the herpesviridae CVC2 protein family. In terms of assembly, heterodimerizes with CVC1. Interacts with major capsid protein/MCP and triplex capsid protein 1/TRX1 at the pentamer vertices. Interacts with the large tegument protein/LTP.

Its subcellular location is the virion. The protein resides in the host nucleus. Functionally, capsid vertex-specific component that plays a role during viral DNA encapsidation, assuring correct genome cleavage and presumably stabilizing capsids that contain full-length viral genomes. Participates in the interaction between the capsid and the tegument through interaction with the large tegument protein/LTP. This chain is Capsid vertex component 2, found in Homo sapiens (Human).